A 341-amino-acid polypeptide reads, in one-letter code: tRNA N6-adenosine threonylcarbamoyltransferase (341 aa).

Fe cation is bound by residues H110 and H114. Substrate contacts are provided by residues L133–G137, D166, G179, and N276. D304 lines the Fe cation pocket.

It belongs to the KAE1 / TsaD family. Fe(2+) serves as cofactor.

The protein resides in the cytoplasm. The enzyme catalyses L-threonylcarbamoyladenylate + adenosine(37) in tRNA = N(6)-L-threonylcarbamoyladenosine(37) in tRNA + AMP + H(+). Its function is as follows. Required for the formation of a threonylcarbamoyl group on adenosine at position 37 (t(6)A37) in tRNAs that read codons beginning with adenine. Is involved in the transfer of the threonylcarbamoyl moiety of threonylcarbamoyl-AMP (TC-AMP) to the N6 group of A37, together with TsaE and TsaB. TsaD likely plays a direct catalytic role in this reaction. The chain is tRNA N6-adenosine threonylcarbamoyltransferase from Saccharophagus degradans (strain 2-40 / ATCC 43961 / DSM 17024).